A 148-amino-acid chain; its full sequence is Single-stranded DNA-binding protein 2 (148 aa).

Residues 4–109 (INSVIIAGNL…IKARRIQFLN (106 aa)) form the SSB domain.

Homotetramer.

The polypeptide is Single-stranded DNA-binding protein 2 (ssb2) (Chlorobaculum tepidum (strain ATCC 49652 / DSM 12025 / NBRC 103806 / TLS) (Chlorobium tepidum)).